Consider the following 517-residue polypeptide: Membrane-bound lytic murein transglycosylase F (517 aa).

An N-terminal signal peptide occupies residues 1-32 (MKKFKINYLLIGIVTLLLAAALWPSIPWFGKA). The interval 33–269 (ENRIAAIQSR…RLEEKYLGHG (237 aa)) is non-LT domain. The tract at residues 270–517 (GDFDYVDTRS…PNTLVQAPRR (248 aa)) is LT domain. Glutamate 314 is a catalytic residue.

This sequence in the N-terminal section; belongs to the bacterial solute-binding protein 3 family. In the C-terminal section; belongs to the transglycosylase Slt family.

It localises to the cell outer membrane. The enzyme catalyses Exolytic cleavage of the (1-&gt;4)-beta-glycosidic linkage between N-acetylmuramic acid (MurNAc) and N-acetylglucosamine (GlcNAc) residues in peptidoglycan, from either the reducing or the non-reducing ends of the peptidoglycan chains, with concomitant formation of a 1,6-anhydrobond in the MurNAc residue.. Functionally, murein-degrading enzyme that degrades murein glycan strands and insoluble, high-molecular weight murein sacculi, with the concomitant formation of a 1,6-anhydromuramoyl product. Lytic transglycosylases (LTs) play an integral role in the metabolism of the peptidoglycan (PG) sacculus. Their lytic action creates space within the PG sacculus to allow for its expansion as well as for the insertion of various structures such as secretion systems and flagella. This is Membrane-bound lytic murein transglycosylase F from Enterobacter sp. (strain 638).